A 558-amino-acid polypeptide reads, in one-letter code: Protein NRT1/ PTR FAMILY 2.7 (558 aa).

12 helical membrane passes run 31 to 51 (FMIA…LNLI), 63 to 83 (IAAA…PAVA), 90 to 110 (FFGT…GVAL), 140 to 162 (LGVL…FTLA), 178 to 198 (FFNW…TAIV), 204 to 224 (ISWT…FLVF), 319 to 339 (IIPL…QLSL), 357 to 377 (IPAG…IIVN), 399 to 419 (VGIG…VEAK), 440 to 460 (VLWL…HFPG), 479 to 499 (SITS…IDLI), and 518 to 538 (VYWI…VCSW).

This sequence belongs to the major facilitator superfamily. Proton-dependent oligopeptide transporter (POT/PTR) (TC 2.A.17) family. In terms of tissue distribution, expressed in shoots and in the cortex of mature roots. Not expressed in root tip meristematic cells.

The protein resides in the cell membrane. In terms of biological role, transporter involved in a passive nitrate efflux. Not competent for chloride transport. This is Protein NRT1/ PTR FAMILY 2.7 (NPF2.7) from Arabidopsis thaliana (Mouse-ear cress).